The following is a 413-amino-acid chain: Probable isoleucine--tRNA ligase, mitochondrial (413 aa).

Residues 298–302 (KMSKS) carry the 'KMSKS' region motif. Position 301 (Lys301) interacts with ATP.

This sequence belongs to the class-I aminoacyl-tRNA synthetase family.

Its subcellular location is the mitochondrion matrix. It catalyses the reaction tRNA(Ile) + L-isoleucine + ATP = L-isoleucyl-tRNA(Ile) + AMP + diphosphate. In Ciona intestinalis (Transparent sea squirt), this protein is Probable isoleucine--tRNA ligase, mitochondrial.